The following is a 172-amino-acid chain: Nicotinamide-nucleotide adenylyltransferase (172 aa).

The protein belongs to the archaeal NMN adenylyltransferase family.

It is found in the cytoplasm. It catalyses the reaction beta-nicotinamide D-ribonucleotide + ATP + H(+) = diphosphate + NAD(+). It functions in the pathway cofactor biosynthesis; NAD(+) biosynthesis; NAD(+) from nicotinamide D-ribonucleotide: step 1/1. This is Nicotinamide-nucleotide adenylyltransferase from Saccharolobus solfataricus (strain ATCC 35092 / DSM 1617 / JCM 11322 / P2) (Sulfolobus solfataricus).